We begin with the raw amino-acid sequence, 1978 residues long: Centrosomal protein Cep290 (1978 aa).

The segment at 1-650 is necessary and sufficient for function in ciliogenesis, transition zone (TZ) assembly, and recruitment of DZP1 and Mks1 to the TZ. Also required for subcellular localization to the cilium basal body; the sequence is MSMDIPETVS…SLCEVPEIAE (650 aa). Coiled coils occupy residues 76–384 and 471–505; these read DRRL…KSQQ and IERLTLKLRTSEELRLQLKLEKSELRRKLLELQQD. The segment at 271–296 is disordered; sequence QLEGKSISSGQTNSSNSQSQQEEEHA. Residues 276 to 290 are compositionally biased toward low complexity; the sequence is SISSGQTNSSNSQSQ. The segment at 663 to 688 is disordered; sequence ATRPSSPTEATMGLRRPTVPDPEEKP. 3 coiled-coil regions span residues 853-887, 922-970, and 1192-1233; these read FEEQQQELLTWRSKQAELQRETKQLEGLLHVANEQ, LAKV…TQQD, and ADAV…SRSE. Basic and acidic residues predominate over residues 1313–1324; sequence KEKLRQKPEVPV. The tract at residues 1313–1397 is disordered; that stretch reads KEKLRQKPEV…EKQDTEELKE (85 aa). The segment covering 1329 to 1341 has biased composition (low complexity); that stretch reads STDSRSSSSSDSS. A compositionally biased stretch (acidic residues) spans 1379–1391; the sequence is VTEEPEGEEEKQD. Coiled coils occupy residues 1405 to 1439 and 1501 to 1654; these read IKDLKDKLEYSERSLKTREEEVDILKEKLKLCQER and LNRT…LESK. Disordered regions lie at residues 1684 to 1714 and 1859 to 1884; these read VGVSKFAPSPSESPETYTGPSSECSSPAHHH and LKDGRRSTESRSSMDSTPAEAARLQQ. The span at 1693–1708 shows a compositional bias: polar residues; the sequence is PSESPETYTGPSSECS. Positions 1726–1935 form a coiled coil; sequence IEALKSRIEL…KEQLVKKTQL (210 aa).

As to quaternary structure, interacts (via N-terminus) with DZIP1. As to expression, expressed in sensory neurons type I and in germ cells (at protein level).

Its subcellular location is the cytoplasm. The protein resides in the cytoskeleton. It is found in the cilium basal body. It localises to the microtubule organizing center. The protein localises to the centrosome. Its subcellular location is the centriole. In terms of biological role, essential for ciliogenesis in sensory neurons and spermatocytes. During neuron and spermatocyte ciliogenesis, essential for initiating transition zone (TZ) assembly and is required for the formation of diverse connections between microtubules and between microtubules and the membrane. Regulates TZ assembly by recruiting DZIP1 to the plasma membrane where it promotes early ciliary membrane formation resulting in the initiation of TZ assembly. This Drosophila melanogaster (Fruit fly) protein is Centrosomal protein Cep290.